A 236-amino-acid polypeptide reads, in one-letter code: DNA repair protein RecO (236 aa).

This sequence belongs to the RecO family.

In terms of biological role, involved in DNA repair and RecF pathway recombination. This Cellvibrio japonicus (strain Ueda107) (Pseudomonas fluorescens subsp. cellulosa) protein is DNA repair protein RecO.